Reading from the N-terminus, the 138-residue chain is Class I hydrophobin 3 (138 aa).

Residues 1–16 form the signal peptide; that stretch reads MRFFLAITALVAAVTA. 4 cysteine pairs are disulfide-bonded: Cys-40/Cys-111, Cys-48/Cys-105, Cys-49/Cys-87, and Cys-112/Cys-130.

The protein belongs to the fungal hydrophobin family. As to quaternary structure, self-assembles to form functional amyloid fibrils called rodlets. Self-assembly into fibrillar rodlets occurs spontaneously at hydrophobic:hydrophilic interfaces and the rodlets further associate laterally to form amphipathic monolayers.

The protein resides in the secreted. It localises to the cell wall. Aerial growth, conidiation, and dispersal of filamentous fungi in the environment rely upon a capability of their secreting small amphipathic proteins called hydrophobins (HPBs) with low sequence identity. Class I can self-assemble into an outermost layer of rodlet bundles on aerial cell surfaces, conferring cellular hydrophobicity that supports fungal growth, development and dispersal; whereas Class II form highly ordered films at water-air interfaces through intermolecular interactions but contribute nothing to the rodlet structure. HYD3 is a class I hydrophobin that contributes to the formation of aerial hyphae and fruiting bodies. The protein is Class I hydrophobin 3 of Cordyceps militaris (Caterpillar fungus).